The sequence spans 318 residues: Methionyl-tRNA formyltransferase (318 aa).

A (6S)-5,6,7,8-tetrahydrofolate-binding site is contributed by 114–117; it reads SVLP.

It belongs to the Fmt family.

It carries out the reaction L-methionyl-tRNA(fMet) + (6R)-10-formyltetrahydrofolate = N-formyl-L-methionyl-tRNA(fMet) + (6S)-5,6,7,8-tetrahydrofolate + H(+). Attaches a formyl group to the free amino group of methionyl-tRNA(fMet). The formyl group appears to play a dual role in the initiator identity of N-formylmethionyl-tRNA by promoting its recognition by IF2 and preventing the misappropriation of this tRNA by the elongation apparatus. The sequence is that of Methionyl-tRNA formyltransferase from Bdellovibrio bacteriovorus (strain ATCC 15356 / DSM 50701 / NCIMB 9529 / HD100).